Consider the following 534-residue polypeptide: Probable bifunctional tRNA threonylcarbamoyladenosine biosynthesis protein (534 aa).

The interval methionine 1 to tryptophan 324 is kae1. Residues histidine 108, histidine 112, and tyrosine 129 each contribute to the Fe cation site. Residues tyrosine 129–glycine 133, aspartate 161, glycine 174, glutamate 178, and asparagine 258 each bind L-threonylcarbamoyladenylate. Aspartate 286 is a binding site for Fe cation. Residues leucine 335–leucine 534 form the Protein kinase domain. Residues lysine 340 to isoleucine 348 and lysine 361 each bind ATP. Aspartate 455 (proton acceptor; for kinase activity) is an active-site residue.

The protein in the N-terminal section; belongs to the KAE1 / TsaD family. It in the C-terminal section; belongs to the protein kinase superfamily. Tyr protein kinase family. BUD32 subfamily. As to quaternary structure, component of the KEOPS complex that consists of Kae1, Bud32, Cgi121 and Pcc1; the whole complex dimerizes. The cofactor is Fe(2+).

The protein resides in the cytoplasm. It catalyses the reaction L-seryl-[protein] + ATP = O-phospho-L-seryl-[protein] + ADP + H(+). It carries out the reaction L-threonyl-[protein] + ATP = O-phospho-L-threonyl-[protein] + ADP + H(+). The enzyme catalyses L-threonylcarbamoyladenylate + adenosine(37) in tRNA = N(6)-L-threonylcarbamoyladenosine(37) in tRNA + AMP + H(+). Functionally, required for the formation of a threonylcarbamoyl group on adenosine at position 37 (t(6)A37) in tRNAs that read codons beginning with adenine. Is a component of the KEOPS complex that is probably involved in the transfer of the threonylcarbamoyl moiety of threonylcarbamoyl-AMP (TC-AMP) to the N6 group of A37. The Kae1 domain likely plays a direct catalytic role in this reaction. The Bud32 domain probably displays kinase activity that regulates Kae1 function. This is Probable bifunctional tRNA threonylcarbamoyladenosine biosynthesis protein from Methanosphaera stadtmanae (strain ATCC 43021 / DSM 3091 / JCM 11832 / MCB-3).